A 271-amino-acid chain; its full sequence is Imidazole glycerol phosphate synthase subunit HisF (271 aa).

Active-site residues include Asp12 and Asp131.

This sequence belongs to the HisA/HisF family. In terms of assembly, heterodimer of HisH and HisF.

Its subcellular location is the cytoplasm. It catalyses the reaction 5-[(5-phospho-1-deoxy-D-ribulos-1-ylimino)methylamino]-1-(5-phospho-beta-D-ribosyl)imidazole-4-carboxamide + L-glutamine = D-erythro-1-(imidazol-4-yl)glycerol 3-phosphate + 5-amino-1-(5-phospho-beta-D-ribosyl)imidazole-4-carboxamide + L-glutamate + H(+). It participates in amino-acid biosynthesis; L-histidine biosynthesis; L-histidine from 5-phospho-alpha-D-ribose 1-diphosphate: step 5/9. Functionally, IGPS catalyzes the conversion of PRFAR and glutamine to IGP, AICAR and glutamate. The HisF subunit catalyzes the cyclization activity that produces IGP and AICAR from PRFAR using the ammonia provided by the HisH subunit. This chain is Imidazole glycerol phosphate synthase subunit HisF, found in Methanospirillum hungatei JF-1 (strain ATCC 27890 / DSM 864 / NBRC 100397 / JF-1).